An 88-amino-acid chain; its full sequence is Mitochondrial import inner membrane translocase subunit TIM9 (88 aa).

The short motif at 35 to 59 (CFDDCVNDFTSNNLTTKETGCITKC) is the Twin CX3C motif element. 2 disulfide bridges follow: Cys35-Cys59 and Cys39-Cys55.

It belongs to the small Tim family. Heterohexamer; composed of 3 copies of TIM9 and 3 copies of TIM10, named soluble 70 kDa complex. Associates with the TIM22 complex, whose core is composed of TIM22 and TIM54. Interacts with the transmembrane regions of multi-pass transmembrane proteins in transit.

Its subcellular location is the mitochondrion inner membrane. Its function is as follows. Mitochondrial intermembrane chaperone that participates in the import and insertion of multi-pass transmembrane proteins into the mitochondrial inner membrane. Also required for the transfer of beta-barrel precursors from the TOM complex to the sorting and assembly machinery (SAM complex) of the outer membrane. Acts as a chaperone-like protein that protects the hydrophobic precursors from aggregation and guide them through the mitochondrial intermembrane space. This is Mitochondrial import inner membrane translocase subunit TIM9 (TIM9) from Debaryomyces hansenii (strain ATCC 36239 / CBS 767 / BCRC 21394 / JCM 1990 / NBRC 0083 / IGC 2968) (Yeast).